The chain runs to 329 residues: Chlorophyllase-1, chloroplastic (329 aa).

Residues M1 to T21 constitute a chloroplast transit peptide. Residues G145–G149 carry the GXSXG motif. The active-site Nucleophile is S147. Residues D169 and H242 each act as charge relay system in the active site.

It belongs to the AB hydrolase superfamily. Lipase family.

The protein localises to the plastid. Its subcellular location is the chloroplast. It carries out the reaction a chlorophyll + H2O = a chlorophyllide + phytol + H(+). It functions in the pathway porphyrin-containing compound metabolism; chlorophyll degradation. Its function is as follows. Catalyzes the hydrolysis of ester bond in chlorophyll to yield chlorophyllide and phytol. This Citrus sinensis (Sweet orange) protein is Chlorophyllase-1, chloroplastic (CHLASE1).